The primary structure comprises 65 residues: Crotamine CRO1 (65 aa).

A signal peptide spans Met1–Ala22. 3 cysteine pairs are disulfide-bonded: Cys26–Cys58, Cys33–Cys52, and Cys40–Cys59.

This sequence belongs to the crotamine-myotoxin family. In terms of assembly, monomer. In terms of tissue distribution, expressed by the venom gland.

The protein localises to the secreted. Cationic peptide that possesses multiple functions. It acts as a cell-penetrating peptide (CPP), and as a potent voltage-gated potassium channel (Kv) inhibitor. It exhibits antimicrobial activities, hind limb paralysis, and severe muscle necrosis by a non-enzymatic mechanism. The protein is Crotamine CRO1 (CRO1) of Crotalus durissus terrificus (South American rattlesnake).